The following is a 319-amino-acid chain: Lipoyl synthase (319 aa).

A compositionally biased stretch (polar residues) spans 1–12; that stretch reads MVTIVDTLSNTP. The disordered stretch occupies residues 1 to 32; it reads MVTIVDTLSNTPLRPRHPEKANRPDSISPAKP. [4Fe-4S] cluster contacts are provided by Cys61, Cys66, Cys72, Cys87, Cys91, Cys94, and Ser300. A Radical SAM core domain is found at 73–289; the sequence is WDKKHATFMI…ETVAYTKGFL (217 aa).

This sequence belongs to the radical SAM superfamily. Lipoyl synthase family. The cofactor is [4Fe-4S] cluster.

It is found in the cytoplasm. It carries out the reaction [[Fe-S] cluster scaffold protein carrying a second [4Fe-4S](2+) cluster] + N(6)-octanoyl-L-lysyl-[protein] + 2 oxidized [2Fe-2S]-[ferredoxin] + 2 S-adenosyl-L-methionine + 4 H(+) = [[Fe-S] cluster scaffold protein] + N(6)-[(R)-dihydrolipoyl]-L-lysyl-[protein] + 4 Fe(3+) + 2 hydrogen sulfide + 2 5'-deoxyadenosine + 2 L-methionine + 2 reduced [2Fe-2S]-[ferredoxin]. Its pathway is protein modification; protein lipoylation via endogenous pathway; protein N(6)-(lipoyl)lysine from octanoyl-[acyl-carrier-protein]: step 2/2. Catalyzes the radical-mediated insertion of two sulfur atoms into the C-6 and C-8 positions of the octanoyl moiety bound to the lipoyl domains of lipoate-dependent enzymes, thereby converting the octanoylated domains into lipoylated derivatives. The chain is Lipoyl synthase from Bradyrhizobium sp. (strain BTAi1 / ATCC BAA-1182).